Here is an 819-residue protein sequence, read N- to C-terminus: Mitosis inhibitor protein kinase SWE1 (819 aa).

Residue S36 is modified to Phosphoserine; by CDC5. T45 is subject to Phosphothreonine; by CDC28. S56 and S63 each carry phosphoserine; by CDC28. Position 70 is a phosphoserine (S70). T74 is modified (phosphothreonine; by CDC28). The interval 86-105 is disordered; the sequence is KIEEEEEEEEEGKDEESVDS. The span at 88–102 shows a compositional bias: acidic residues; sequence EEEEEEEEEGKDEES. Position 102 is a phosphoserine; by CDC5 (S102). S105 is subject to Phosphoserine; by CDC28. Position 111 is a phosphoserine; by CDC5, CDC28 and CLA4 (S111). The segment at 117–168 is disordered; the sequence is ESVTTPITKRSAEKTNSPISLKQWNQRWFPKNDARTENTSSSSSYSVAKPNQ. S118 carries the post-translational modification Phosphoserine; by CDC5. The span at 118–142 shows a compositional bias: polar residues; it reads SVTTPITKRSAEKTNSPISLKQWNQ. Phosphothreonine; by CDC28 is present on residues T121 and T124. Phosphoserine; by CDC28 is present on S127. The residue at position 131 (T131) is a Phosphothreonine; by CDC5. S133 carries the phosphoserine; by CDC28 modification. S136 carries the post-translational modification Phosphoserine; by CDC28 and CLA4. 2 positions are modified to phosphoserine; by CDC5: S156 and S169. Phosphothreonine; by CDC28 is present on T196. Residue S201 is modified to Phosphoserine; by CDC28. Phosphoserine; by CDC5 is present on residues S225 and S254. Phosphoserine is present on S262. A phosphoserine; by CDC28 mark is found at S263 and S266. Positions 278–297 are disordered; that stretch reads NQTNILSPTNSLVTNSSPQT. Residue T280 is modified to Phosphothreonine; by CDC5. S284 and S294 each carry phosphoserine. S312 bears the Phosphoserine; by CLA4 mark. The disordered stretch occupies residues 341–395; the sequence is PIIISSHHSTRKNPQPYQFRGRYDNDTDEEISTPTRRKSIIGATSQTHRESRPLS. A Phosphoserine modification is found at S345. 2 positions are modified to phosphothreonine; by CDC28: T367 and T373. S379 is subject to Phosphoserine; by CDC5 and CLA4. T384 is subject to Phosphothreonine; by CDC28. 2 positions are modified to phosphoserine; by CDC5 and CLA4: S395 and S438. The Protein kinase domain occupies 444–794; sequence FTNVHSIGKG…NQILQTEECL (351 aa). ATP contacts are provided by residues 450–458 and K473; that span reads IGKGQFSTV. Residue D579 is the Proton acceptor of the active site. Mg(2+) contacts are provided by N584 and D597. Residue S610 is modified to Phosphoserine; by CDC5. T629 is modified (phosphothreonine; by CDC5). T688 carries the post-translational modification Phosphothreonine; by CDC5 and CLA4. A Phosphothreonine modification is found at T692. The segment covering 707–716 has biased composition (polar residues); it reads SNNAGTSTVH. A disordered region spans residues 707-736; sequence SNNAGTSTVHNNSNINNPNMNNGNDNNNVN. Residues 717–736 are compositionally biased toward low complexity; the sequence is NNSNINNPNMNNGNDNNNVN. K741 participates in a covalent cross-link: Glycyl lysine isopeptide (Lys-Gly) (interchain with G-Cter in ubiquitin).

It belongs to the protein kinase superfamily. Ser/Thr protein kinase family. WEE1 subfamily. Interacts with CLB2-CDC28. Partial hyperphosphorylation of SWE1 by CLB2-CDC28 stabilizes the ternary complex of SWE1 and CLB2-CDC28 and stimulates kinase activity of SWE1 in a positive feedback loop, maintaining CLB2-CDC28 in the tyrosine-phosphorylated state. Fully hyperphosphorylated SWE1 dissociates from CLB2-CDC28. Interacts with HSL7, KCC4 and MET30. Ubiquitinated by the SCF(MET30) complex, leading to its degradation by the proteasome. Post-translationally, phosphorylated progressively by CLA4, CLB2-CDC28 and CDC5. CLA4-dependent phosphorylation occurs in late S phase, followed by phosphorylation by CLB2-CDC28 in early G2, when the levels of mitotic CLB2 increases. This phosphorylation is critical for triggering subsequent SWE1-CDC5 interaction and CDC5-dependent phosphorylation. The resulting cumulative hyperphosphorylation down-regulates SWE1 by targeting it for ubiquitin-mediated degradation. This stepwise phosphorylation is thought to be a mechanism to integrate the different checkpoint requirements before entry into mitosis.

Its subcellular location is the bud neck. It is found in the nucleus. The enzyme catalyses L-seryl-[protein] + ATP = O-phospho-L-seryl-[protein] + ADP + H(+). It carries out the reaction L-threonyl-[protein] + ATP = O-phospho-L-threonyl-[protein] + ADP + H(+). In terms of biological role, protein kinase that acts as a negative regulator of entry into mitosis (G2 to M transition) by phosphorylating and inhibiting the mitosis-promoting cyclin B-bound CDC28 at 'Tyr-19'. SWE1-mediated inhibition of CDC28 acts in a cell size or morphogenesis checkpoint to delay mitosis in response to defects in growth, actin organization or bud formation. Inhibits the activity of B-type cyclins in replication initiation strongly for CLB2, moderately for CLB3 and CLB4, and there is no apparent inhibition for CLB5 and CLB6, correlating with the normal expression timing of those cyclins. Hyperphosphorylation and degradation of SWE1 when all checkpoint requirement are met releases CLB2-CDC28 from inhibition and allows for progression through the cell cycle. SWE1-dependent CDC28 phosphorylation is also required for pachytene arrest upon activation of the recombination checkpoint during meiosis. Also involved in the regulation of nitrogen starvation- and short chain alcohol-induced filamentous growth, or filamentous differentiation in response to slowed DNA synthesis. Can act both on serines and on tyrosines. The polypeptide is Mitosis inhibitor protein kinase SWE1 (SWE1) (Saccharomyces cerevisiae (strain ATCC 204508 / S288c) (Baker's yeast)).